The primary structure comprises 73 residues: Putative membrane protein insertion efficiency factor (73 aa).

Belongs to the UPF0161 family.

The protein resides in the cell inner membrane. Could be involved in insertion of integral membrane proteins into the membrane. This chain is Putative membrane protein insertion efficiency factor, found in Jannaschia sp. (strain CCS1).